Consider the following 666-residue polypeptide: NAD(P)H-quinone oxidoreductase subunit 5, organellar chromatophore 1 (666 aa).

The next 15 membrane-spanning stretches (helical) occupy residues 8–28 (LVWL…FGLI), 41–61 (AALL…MVLA), 90–110 (VDPI…LVMV), 121–141 (SYVR…ALIL), 145–165 (LLEI…LIGF), 190–210 (FLLG…QIVA), 220–240 (GSIP…GPMA), 259–279 (TPIS…FLVA), 293–313 (IIVA…ALIQ), 328–348 (LGYM…FHLI), 396–416 (GITF…AGFW), 428–448 (SYPL…FYMF), 497–517 (TLPL…GSPW), 542–562 (FLPL…IATI), and 643–663 (GRPQ…IVIF).

The protein belongs to the complex I subunit 5 family. NDH is composed of at least 16 different subunits, 5 of which are encoded in the nucleus.

It is found in the plastid. The protein localises to the organellar chromatophore thylakoid membrane. The catalysed reaction is a plastoquinone + NADH + (n+1) H(+)(in) = a plastoquinol + NAD(+) + n H(+)(out). It catalyses the reaction a plastoquinone + NADPH + (n+1) H(+)(in) = a plastoquinol + NADP(+) + n H(+)(out). Its function is as follows. NDH shuttles electrons from NAD(P)H:plastoquinone, via FMN and iron-sulfur (Fe-S) centers, to quinones in the photosynthetic chain and possibly in a chloroplast respiratory chain. The immediate electron acceptor for the enzyme in this species is believed to be plastoquinone. Couples the redox reaction to proton translocation, and thus conserves the redox energy in a proton gradient. The sequence is that of NAD(P)H-quinone oxidoreductase subunit 5, organellar chromatophore 1 (ndhF1) from Paulinella chromatophora.